The primary structure comprises 716 residues: DNA ligase (716 aa).

NAD(+) contacts are provided by residues 47–51, 96–97, and glutamate 130; these read DATYD and SL. Catalysis depends on lysine 132, which acts as the N6-AMP-lysine intermediate. 4 residues coordinate NAD(+): arginine 153, glutamate 190, lysine 306, and lysine 330. Zn(2+)-binding residues include cysteine 435, cysteine 438, cysteine 453, and cysteine 459. One can recognise a BRCT domain in the interval 638 to 716; that stretch reads RSDSAVAGKT…EDEWLKLIEG (79 aa).

This sequence belongs to the NAD-dependent DNA ligase family. LigA subfamily. It depends on Mg(2+) as a cofactor. Requires Mn(2+) as cofactor.

It carries out the reaction NAD(+) + (deoxyribonucleotide)n-3'-hydroxyl + 5'-phospho-(deoxyribonucleotide)m = (deoxyribonucleotide)n+m + AMP + beta-nicotinamide D-nucleotide.. DNA ligase that catalyzes the formation of phosphodiester linkages between 5'-phosphoryl and 3'-hydroxyl groups in double-stranded DNA using NAD as a coenzyme and as the energy source for the reaction. It is essential for DNA replication and repair of damaged DNA. The protein is DNA ligase of Nitrobacter winogradskyi (strain ATCC 25391 / DSM 10237 / CIP 104748 / NCIMB 11846 / Nb-255).